Consider the following 898-residue polypeptide: Putative aconitate hydratase, cytoplasmic (898 aa).

Substrate contacts are provided by residues glutamine 90 and aspartate 209–histidine 211. Cysteine 441, cysteine 507, and cysteine 510 together coordinate [4Fe-4S] cluster. Substrate contacts are provided by residues arginine 540, arginine 545, arginine 703, and serine 784–arginine 785.

Belongs to the aconitase/IPM isomerase family. Requires [4Fe-4S] cluster as cofactor.

It localises to the cytoplasm. It catalyses the reaction citrate = D-threo-isocitrate. Its pathway is carbohydrate metabolism; glyoxylate and dicarboxylate metabolism. In terms of biological role, catalyzes the isomerization of citrate to isocitrate via cis-aconitate. This chain is Putative aconitate hydratase, cytoplasmic, found in Oryza sativa subsp. japonica (Rice).